The sequence spans 692 residues: Vacuolar amino acid transporter 3 (692 aa).

Residues 1-14 (MNGKEVSSGSGRTQ) are compositionally biased toward polar residues. The tract at residues 1–71 (MNGKEVSSGS…TGGLLKKPPL (71 aa)) is disordered. Low complexity predominate over residues 15 to 24 (SNNNKKNNNG). The segment covering 28–38 (GISHASGSPLT) has biased composition (polar residues). Ser59, Ser119, and Ser121 each carry phosphoserine. Disordered stretches follow at residues 135-170 (KWTN…SNRK) and 258-294 (DLSE…GRHP). Residues 141 to 153 (PSSPSQYQYPSQP) show a composition bias toward low complexity. Positions 154–167 (ALSTSIPSQAPSFS) are enriched in polar residues. Residue Ser165 is modified to Phosphoserine. Acidic residues predominate over residues 258–279 (DLSEEEEEEEETEEEPEEEALE). 11 helical membrane passes run 302 to 322 (AVLL…PKAF), 329 to 349 (FSAL…VSLI), 374 to 394 (FAIL…YTVF), 412 to 432 (GSIS…PLSL), 443 to 463 (ALIA…YSIY), 483 to 503 (WSLF…LIPI), 519 to 539 (AVMC…YAAF), 561 to 581 (VQLL…FPAI), 607 to 627 (YFRC…ANDL), 630 to 650 (FVSL…PPLL), and 665 to 685 (LLLD…TSWQ).

This sequence belongs to the amino acid/polyamine transporter 2 family.

Its subcellular location is the vacuole membrane. Its function is as follows. Involved in amino acid efflux from the vacuole to the cytoplasm. Capable of transporting large neutral amino acids including tyrosine, glutamine, asparagine, isoleucine and leucine. This Saccharomyces cerevisiae (strain ATCC 204508 / S288c) (Baker's yeast) protein is Vacuolar amino acid transporter 3 (AVT3).